The chain runs to 245 residues: Small ribosomal subunit protein uS3 (245 aa).

Residues 39 to 108 (IRNYIKKNYY…SVFVNVQEVK (70 aa)) enclose the KH type-2 domain.

The protein belongs to the universal ribosomal protein uS3 family. As to quaternary structure, part of the 30S ribosomal subunit. Forms a tight complex with proteins S10 and S14.

Its function is as follows. Binds the lower part of the 30S subunit head. Binds mRNA in the 70S ribosome, positioning it for translation. The polypeptide is Small ribosomal subunit protein uS3 (Dictyoglomus turgidum (strain DSM 6724 / Z-1310)).